A 499-amino-acid polypeptide reads, in one-letter code: Cytosol aminopeptidase (499 aa).

Mn(2+) contacts are provided by K267 and D272. K279 is a catalytic residue. Mn(2+) is bound by residues D290, D349, and E351. Residue R353 is part of the active site.

The protein belongs to the peptidase M17 family. Requires Mn(2+) as cofactor.

It localises to the cytoplasm. It catalyses the reaction Release of an N-terminal amino acid, Xaa-|-Yaa-, in which Xaa is preferably Leu, but may be other amino acids including Pro although not Arg or Lys, and Yaa may be Pro. Amino acid amides and methyl esters are also readily hydrolyzed, but rates on arylamides are exceedingly low.. The enzyme catalyses Release of an N-terminal amino acid, preferentially leucine, but not glutamic or aspartic acids.. Functionally, presumably involved in the processing and regular turnover of intracellular proteins. Catalyzes the removal of unsubstituted N-terminal amino acids from various peptides. This is Cytosol aminopeptidase (pepA) from Buchnera aphidicola subsp. Acyrthosiphon pisum (strain APS) (Acyrthosiphon pisum symbiotic bacterium).